The chain runs to 162 residues: NADH-quinone oxidoreductase subunit I (162 aa).

4Fe-4S ferredoxin-type domains are found at residues 53–83 and 93–122; these read LRRY…IESE and TRYD…ETRV. Residues Cys63, Cys66, Cys69, Cys73, Cys102, Cys105, Cys108, and Cys112 each coordinate [4Fe-4S] cluster.

The protein belongs to the complex I 23 kDa subunit family. NDH-1 is composed of 14 different subunits. Subunits NuoA, H, J, K, L, M, N constitute the membrane sector of the complex. It depends on [4Fe-4S] cluster as a cofactor.

The protein resides in the cell inner membrane. The enzyme catalyses a quinone + NADH + 5 H(+)(in) = a quinol + NAD(+) + 4 H(+)(out). In terms of biological role, NDH-1 shuttles electrons from NADH, via FMN and iron-sulfur (Fe-S) centers, to quinones in the respiratory chain. The immediate electron acceptor for the enzyme in this species is believed to be ubiquinone. Couples the redox reaction to proton translocation (for every two electrons transferred, four hydrogen ions are translocated across the cytoplasmic membrane), and thus conserves the redox energy in a proton gradient. This chain is NADH-quinone oxidoreductase subunit I, found in Nitrosomonas europaea (strain ATCC 19718 / CIP 103999 / KCTC 2705 / NBRC 14298).